Here is a 530-residue protein sequence, read N- to C-terminus: Testis-expressed protein 44 (530 aa).

The segment covering 1–10 has biased composition (acidic residues); sequence MTAEPLEDPE. 4 disordered regions span residues 1–85, 207–233, 256–290, and 305–384; these read MTAE…FIRT, ATSA…TSLL, ENNR…QPVL, and QTSV…SPDF. Composition is skewed to polar residues over residues 11–26, 222–233, and 257–280; these read ASSS…SSDN, GQDNPEETTSLL, and NNRT…TLGN. The span at 365–381 shows a compositional bias: pro residues; sequence PPDPPDPGSPGGSPPHS. Phosphoserine is present on S468.

It is found in the cytoplasm. The protein is Testis-expressed protein 44 (Tex44) of Mus musculus (Mouse).